Here is a 929-residue protein sequence, read N- to C-terminus: Band 4.1-like protein 3 (929 aa).

The residue at position 1 (methionine 1) is an N-acetylmethionine. The disordered stretch occupies residues 1 to 72 (MTTESGSDSE…STPVKREIGD (72 aa)). The residue at position 2 (threonine 2) is an N-acetylthreonine; in Band 4.1-like protein 3, N-terminally processed. The segment covering 20 to 33 (QEAAGPQGQAGAQP) has biased composition (low complexity). Serine 96 is subject to Phosphoserine. The region spanning 118 to 399 (MQCKVTLLDG…EHHTFFRLLL (282 aa)) is the FERM domain. The hydrophilic stretch occupies residues 402 to 528 (APPKKFLTLG…PVTALRHEGK (127 aa)). Phosphoserine is present on residues serine 428, serine 451, and serine 486. The disordered stretch occupies residues 490–554 (LITTVTPEKK…TESDQEEDAE (65 aa)). At threonine 495 the chain carries Phosphothreonine. A compositionally biased stretch (basic and acidic residues) spans 496–516 (PEKKAEEERVEEEDRRKKAEE). Threonine 518 is subject to Phosphothreonine. Residues 523–536 (LRHEGKTDSERTDT) show a composition bias toward basic and acidic residues. Phosphoserine is present on residues histidine 525 and serine 543. Threonine 545 is subject to Phosphothreonine. Serine 547 bears the Phosphoserine mark. The interval 559 to 602 (DLDKTQDELMKHQTNISELKRTFLETSTETALTNEWEKRLSTSP) is spectrin--actin-binding. Disordered regions lie at residues 608–630 (RQED…SGEK), 665–689 (LETK…STEK), and 705–807 (VHAS…SPGG). Threonine 725 bears the Phosphothreonine mark. Over residues 726–737 (PTDRRHTGKGKE) the composition is skewed to basic and acidic residues. The segment at 777–929 (RTSEGLEQKS…TEITPEDGED (153 aa)) is C-terminal (CTD). The segment covering 789 to 802 (ESSTVRVESTSVGS) has biased composition (low complexity). A phosphoserine mark is found at serine 802 and serine 804. Threonine 923 is subject to Phosphothreonine.

As to quaternary structure, interacts (via FERM domain) with CADM1. Interacts (via FERM domain) with PRMT3; the interaction is direct and inhibits the protein-arginine N-methyltransferase activity of PRMT3. Interacts with PRMT5. Interacts with PRMT6. In terms of assembly, has the complete spectrin--actin-binding (SAB) domain and fully interacts with spectrin and actin. As to expression, detected in brain (at protein level). Highest expression in brain, lower in testis, adrenal gland, heart and kidney. Also present in muscle and epithelial cells. Isoform 1 is expressed in brain, isoform 2 is expressed in heart and isoform 3 is mostly expressed in kidney but also in heart and brain. Isoform 6 seems to be most abundant in kidney while isoform 4 and isoform 5 are predominantly expressed in heart and brain.

The protein resides in the cytoplasm. It localises to the cytoskeleton. The protein localises to the cell membrane. It is found in the cell junction. Its function is as follows. Tumor suppressor that inhibits cell proliferation and promotes apoptosis. Modulates the activity of protein arginine N-methyltransferases, including PRMT3 and PRMT5. This chain is Band 4.1-like protein 3, found in Mus musculus (Mouse).